The chain runs to 1157 residues: Hephaestin (1157 aa).

Positions 1–23 are cleaved as a signal peptide; sequence MKAGHLLWALLLMHSLCSLPTDG. 6 Plastocyanin-like domains span residues 24 to 206, 218 to 366, 370 to 559, 569 to 717, 730 to 902, and 910 to 1066; these read AIRN…LITC, QRKD…VDSC, PPVE…LLVC, KQKG…VSQC, ASRV…LVIC, and NGGR…SHEE. The Extracellular portion of the chain corresponds to 24 to 1109; the sequence is AIRNYYLGIQ…PVKNVEILSS (1086 aa). N-linked (GlcNAc...) asparagine glycosylation is found at asparagine 49 and asparagine 54. Na(+) is bound by residues glycine 70 and tyrosine 73. 2 residues coordinate Cu(2+): histidine 126 and histidine 128. Residue histidine 126 participates in O2 binding. Lysine 134, aspartate 152, and aspartate 153 together coordinate Ca(2+). Asparagine 164 carries N-linked (GlcNAc...) asparagine glycosylation. Cysteine 180 and cysteine 206 are oxidised to a cystine. Residues histidine 186 and histidine 188 each coordinate Cu(2+). Histidine 186 contributes to the O2 binding site. N-linked (GlcNAc...) asparagine glycosylation occurs at asparagine 236. Serine 265 is a binding site for Na(+). The cysteines at positions 285 and 366 are disulfide-linked. Residues histidine 304, cysteine 347, and histidine 352 each contribute to the Cu(2+) site. Na(+) is bound by residues tyrosine 416, glycine 425, and tyrosine 428. The cysteines at positions 533 and 559 are disulfide-linked. The N-linked (GlcNAc...) asparagine glycan is linked to asparagine 587. Serine 616 contacts Na(+). An intrachain disulfide couples cysteine 636 to cysteine 717. Cu(2+) is bound by residues histidine 655, cysteine 698, histidine 703, and methionine 708. N-linked (GlcNAc...) asparagine glycans are attached at residues asparagine 713 and asparagine 757. Residues phenylalanine 768 and glycine 777 each coordinate Na(+). A disulfide bridge links cysteine 876 with cysteine 902. Asparagine 930 carries an N-linked (GlcNAc...) asparagine glycan. Positions 999, 1002, 1004, 1044, 1045, 1046, 1050, and 1055 each coordinate Cu(2+). Residues histidine 1002 and histidine 1004 each contribute to the O2 site. O2 is bound at residue histidine 1046. Residues 1110–1130 traverse the membrane as a helical segment; that stretch reads ALIAICVVLLLIALALGGVVW. At 1131–1157 the chain is on the cytoplasmic side; the sequence is YQHRQRKLRRNRRSILDDSFKLLSLKQ. Residues serine 1144, serine 1149, and serine 1154 each carry the phosphoserine modification.

This sequence belongs to the multicopper oxidase family. In terms of assembly, part of a complex composed of SLC40A1/ferroportin, TF/transferrin and HEPH/hephaestin that transfers iron from cells to transferrin. Cu cation serves as cofactor. Highly expressed in small intestine and colon.

It is found in the basolateral cell membrane. It carries out the reaction 4 Fe(2+) + O2 + 4 H(+) = 4 Fe(3+) + 2 H2O. Functionally, plasma membrane ferroxidase that mediates the extracellular conversion of ferrous/Fe(2+) iron into its ferric/Fe(3+) form. Couples ferroportin which specifically exports ferrous/Fe(2+) iron from cells to transferrin that only binds and shuttles extracellular ferric/Fe(3+) iron throughout the body. By helping iron transfer from cells to blood mainly contributes to dietary iron absorption by the intestinal epithelium and more generally regulates iron levels in the body. The polypeptide is Hephaestin (Rattus norvegicus (Rat)).